The following is a 92-amino-acid chain: Bombyxin A-9 (92 aa).

The signal sequence occupies residues 1 to 19 (MKLLLAIALMLTTVMWAST). The residue at position 20 (Gln20) is a Pyrrolidone carboxylic acid. Disulfide bonds link Cys29-Cys79, Cys41-Cys92, and Cys78-Cys83. A propeptide spans 50–71 (SDAQFASYGSAWLMPYSEGRDQ) (c peptide like).

It belongs to the insulin family. In terms of assembly, heterodimer of a B chain and an A chain linked by two disulfide bonds.

The protein localises to the secreted. Its function is as follows. Brain peptide responsible for activation of prothoracic glands to produce ecdysone in insects. In Bombyx mori (Silk moth), this protein is Bombyxin A-9 (BBXA9).